The primary structure comprises 344 residues: 5,10-methenyltetrahydromethanopterin hydrogenase (344 aa).

The protein belongs to the HMD family. As to quaternary structure, homotetramer.

It carries out the reaction 5,10-methenyl-5,6,7,8-tetrahydromethanopterin + H2 = 5,10-methylenetetrahydromethanopterin + H(+). It participates in one-carbon metabolism; methanogenesis from CO(2); 5,10-methylene-5,6,7,8-tetrahydromethanopterin from 5,10-methenyl-5,6,7,8-tetrahydromethanopterin (hydrogen route): step 1/1. With respect to regulation, activity requires salt; 100 mM sodium or potassium salts of chloride, phosphate or sulfate are equally effective. Inactivated by O(2). In terms of biological role, catalyzes the reversible reduction of methenyl-H(4)MPT(+) to methylene-H(4)MPT. This Methanothermobacter marburgensis (strain ATCC BAA-927 / DSM 2133 / JCM 14651 / NBRC 100331 / OCM 82 / Marburg) (Methanobacterium thermoautotrophicum) protein is 5,10-methenyltetrahydromethanopterin hydrogenase.